Reading from the N-terminus, the 1596-residue chain is Transcription factor Zelda (1596 aa).

Disordered stretches follow at residues 1–143, 209–273, and 490–530; these read MTSI…QQQQ, SGLG…GGAA, and TSPA…SVLP. Positions 13 to 24 are enriched in low complexity; it reads AAEALASSSATD. The segment covering 25–53 has biased composition (gly residues); sequence SGGGGAGGGGGGGGGGSGGPGAGGTGGVG. Positions 60–72 are enriched in polar residues; the sequence is NATISAAADSSDN. Low complexity-rich tracts occupy residues 73-123 and 226-267; these read QPGT…ITHQ and SAPS…QTPG. Residues 501–518 are compositionally biased toward gly residues; it reads GGPGQEGAAGAAPGGGYR. A C2H2-type 1 zinc finger spans residues 552–576; the sequence is YNCTACNKWFTSSGHLKRHYNTTLH. 4 disordered regions span residues 578-813, 825-945, 1017-1074, and 1252-1322; these read NAVK…TTTA, EDSN…MGML, GEQH…MPLT, and QMQH…TTLP. Residues 610 to 634 are compositionally biased toward low complexity; that stretch reads RGNAAAAAAAAAAAASASGQGQQQQ. Over residues 635 to 653 the composition is skewed to pro residues; that stretch reads PPIPPPPANVPPPEPPRSP. Positions 656 to 668 are enriched in gly residues; that stretch reads YGGGGGLGVGAMG. The segment covering 673–682 has biased composition (polar residues); sequence SQYSASPSPT. 2 stretches are compositionally biased toward low complexity: residues 683-709 and 719-753; these read QQQQ…GYGY and NASP…HHNS. Over residues 768–781 the composition is skewed to polar residues; the sequence is PHNNNTTQMPSSQM. The segment covering 796–813 has biased composition (low complexity); that stretch reads TTTRAPQITTTATTTTTA. The span at 830-840 shows a compositional bias: basic residues; it reads THTHTHTHPNH. The segment covering 849–858 has biased composition (low complexity); it reads SSSSSSSMAT. The segment covering 864–877 has biased composition (basic and acidic residues); the sequence is QELRDQEQADDHLH. The segment covering 879-916 has biased composition (low complexity); that stretch reads HQQASQQYLLSARHYHSSTPNTLSSSNTNPSTPSSNSP. A transactivation activation domain (TAD) region spans residues 904–1297; it reads SNTNPSTPSS…PLAKKRRGGN (394 aa). A compositionally biased stretch (polar residues) spans 921–932; it reads RQEQQGTDFSRT. A compositionally biased stretch (pro residues) spans 933 to 944; sequence TPPPQPLPPMGM. The span at 1019-1036 shows a compositional bias: basic and acidic residues; sequence QHQRQEADHHQQQRELHQ. Low complexity-rich tracts occupy residues 1037–1062 and 1252–1275; these read LDQQ…SPTS and QMQH…QQQQ. Polar residues-rich tracts occupy residues 1276–1286 and 1309–1322; these read ILADQTQTMAQ and SSVG…TTLP. Residues 1326-1349 form a C2H2-type 2 zinc finger; it reads IKCLECDKEFTKNCYLTQHNKSFH. The C2H2-type 3; degenerate zinc-finger motif lies at 1355 to 1378; it reads FRCQKCGKRFQSEDVYTTHLGRHR. C2H2-type zinc fingers lie at residues 1384–1407 and 1413–1435; these read HKCE…EAIH and HMCD…LETH.

In terms of tissue distribution, zygotically expressed in the developing embryonic germ layers, nervous system, imaginal disk primordia and in larval wing and eye disks. Detected in the germline cells of the ovary, in unfertilized eggs and throughout early development. Later, it becomes mostly restricted to the nervous system and specific head regions. Also expressed in imaginal wing disks in third instar larvae.

It is found in the nucleus. The protein resides in the chromosome. Its function is as follows. Transcription factor required for zygotic genome activation (ZGA), a critical event in early embryonic development during which the developmental control passes from maternally provided mRNAs to the expression of the zygotic genome after fertilization. Binds to regulatory DNA sequences containing a 5'-CAGGTAG-3' sequence motif, which are highly enriched among developmental enhancers. Within 1 hour into development, or by the embryo's 8th nuclear cycle, binds the majority of its motifs genome-wide. Zelda-binding promotes nucleosome depletion and chromatin accessibility, thereby facilitating the binding of patterning transcription factors, including the binding of the dorsoventral patterning transcription factors dorsal (dl) and twist (twi), and the anteroposterior patterning transcription factors bicoid (bcd) and caudal (cad). Promotes the activity of patterning transcription factors, such as bcd and dl, by lowering the concentration threshold required for transcriptional activation. Required both for the earliest (minor) and major waves of transcription during ZGA. Also involved in maternal mRNA clearance during the maternal-to-zygote transition by promoting expression of microRNAs (miRNAs), such as miR-1, miR-9a and miR-309, which mediate degradation of maternally-loaded RNAs. Also involved in post-blastoderm development: nvolved in nervous system development by maintaining neuroblasts in an undifferentiated state and equired for wing disk development. Functionally, constitutes the main isoform expressed throughout development. Transcription factor required for zygotic genome activation (ZGA). Acts as a dominant negative inhibitor of transcription factor activity of isoform A. The chain is Transcription factor Zelda from Drosophila melanogaster (Fruit fly).